Reading from the N-terminus, the 210-residue chain is 2,3-bisphosphoglycerate-dependent phosphoglycerate mutase (210 aa).

Substrate-binding positions include 9-16, 22-23, R61, 88-91, K99, 115-116, and 159-160; these read RHGQSEWN, TG, ERDY, RR, and GN. Residue H10 is the Tele-phosphohistidine intermediate of the active site. Catalysis depends on E88, which acts as the Proton donor/acceptor.

It belongs to the phosphoglycerate mutase family. BPG-dependent PGAM subfamily. As to quaternary structure, homodimer.

It catalyses the reaction (2R)-2-phosphoglycerate = (2R)-3-phosphoglycerate. Its pathway is carbohydrate degradation; glycolysis; pyruvate from D-glyceraldehyde 3-phosphate: step 3/5. Its function is as follows. Catalyzes the interconversion of 2-phosphoglycerate and 3-phosphoglycerate. The polypeptide is 2,3-bisphosphoglycerate-dependent phosphoglycerate mutase (Parvibaculum lavamentivorans (strain DS-1 / DSM 13023 / NCIMB 13966)).